A 216-amino-acid polypeptide reads, in one-letter code: Ras-related protein RABE1c (216 aa).

22–29 (GDSGVGKS) is a GTP binding site. An Effector region motif is present at residues 44–52 (FITTIGIDF). GTP is bound by residues 70–74 (DTAGQ), 128–131 (NKAD), and 159–160 (SA). Residues Cys-213 and Cys-214 are each lipidated (S-geranylgeranyl cysteine).

Belongs to the small GTPase superfamily. Rab family. As to quaternary structure, interacts with PI5K2.

Its subcellular location is the golgi apparatus membrane. It is found in the cell membrane. Functionally, involved in membrane trafficking from the Golgi to the plasma membrane. This chain is Ras-related protein RABE1c (RABE1C), found in Arabidopsis thaliana (Mouse-ear cress).